We begin with the raw amino-acid sequence, 79 residues long: Conotoxin Tr6.3 (79 aa).

Residues 1-22 form the signal peptide; that stretch reads MKLTCVLIISVLFLTASQLITA. Positions 23 to 47 are excised as a propeptide; the sequence is VYSRDKQQYRAARLRDEMRNLKGAR. 3 cysteine pairs are disulfide-bonded: Cys49–Cys62, Cys56–Cys67, and Cys61–Cys77. 4-hydroxyproline is present on residues Pro60 and Pro63.

It belongs to the conotoxin O1 superfamily. Expressed by the venom duct.

The protein resides in the secreted. Ion channel inhibitor that inhibits the increase in intracellular calcium upon depolarization in DRG neurons. In vivo, both intraperitoneal and intracranial injections into mice induce hyperactivity. In Conus terebra (Sea snail), this protein is Conotoxin Tr6.3.